A 555-amino-acid polypeptide reads, in one-letter code: Perforin-1 (555 aa).

The signal sequence occupies residues 1-21; the sequence is MAARLLLLGILLLLLPLPVPA. Cystine bridges form between Cys-23–Cys-76, Cys-31–Cys-73, and Cys-102–Cys-176. Positions 27-375 constitute an MACPF domain; it reads ARSECKRSHK…QYLTDRARWR (349 aa). A beta stranded transmembrane segment spans residues 129 to 149; that stretch reads WKVGLDVTPKPTSNVHVSVAG. N-linked (GlcNAc...) asparagine glycosylation is present at Asn-205. Disulfide bonds link Cys-242–Cys-408, Cys-377–Cys-393, Cys-381–Cys-395, and Cys-397–Cys-407. Residues 257–279 traverse the membrane as a beta stranded segment; sequence CLTVEAQVNIGIHGSISAEAKAC. In terms of domain architecture, EGF-like spans 376 to 408; the sequence is DCSRPCPPGRQKSPRDPCQCVCHGSAVTTQDCC. The region spanning 397–519 is the C2 domain; that stretch reads CHGSAVTTQD…CNLNHGHLKF (123 aa). Gly-429, Asp-430, Thr-433, Ala-434, Asp-436, Asp-484, Asp-486, Asp-490, Asp-491, and Asp-492 together coordinate Ca(2+). Cystine bridges form between Cys-497–Cys-510 and Cys-525–Cys-534. Asn-549 carries N-linked (GlcNAc...) asparagine glycosylation.

It belongs to the complement C6/C7/C8/C9 family. Monomer, as soluble protein. Homooligomer; homooligomerizes to form a pore-forming ring. Requires Ca(2+) as cofactor. N-glycosylated.

The protein resides in the cytolytic granule. The protein localises to the secreted. It localises to the cell membrane. It is found in the endosome lumen. In terms of biological role, pore-forming protein that plays a key role in granzyme-mediated programmed cell death, and in defense against virus-infected or neoplastic cells. Plays an important role in killing other cells that are recognized as non-self by the immune system, e.g. in transplant rejection or some forms of autoimmune disease. Can insert into the membrane of target cells in its calcium-bound form, oligomerize and form large pores. Promotes cytolysis and apoptosis of target cells by mediating the passage and uptake of cytotoxic granzymes. Facilitates the delivery of cationic cargo protein, while anionic or neural proteins are not delivered efficiently. Perforin pores allow the release of mature caspase-7 (CASP7) into the extracellular milieu. The sequence is that of Perforin-1 (PRF1) from Homo sapiens (Human).